The chain runs to 453 residues: Mogroside IIIx synthase (453 aa).

H21 functions as the Proton acceptor in the catalytic mechanism. The Charge relay role is filled by D122. The UDP-alpha-D-glucose site is built by S273, Q336, W354, N355, S356, E359, D375, and Q376.

The protein belongs to the UDP-glycosyltransferase family. As to expression, highly expressed in mature fruits.

It catalyses the reaction mogroside IIE + UDP-alpha-D-glucose = mogroside IIIX + UDP + H(+). It carries out the reaction mogroside III + UDP-alpha-D-glucose = mogroside IV + UDP + H(+). The enzyme catalyses mogroside III + UDP-alpha-D-glucose = siamenoside I + UDP + H(+). The catalysed reaction is mogroside IV + UDP-alpha-D-glucose = mogroside V + UDP + H(+). Its pathway is secondary metabolite biosynthesis; terpenoid biosynthesis. In terms of biological role, UDP-glycosyltransferase involved in the biosynthesis of cucurbitacin and mogroside tetracyclic triterpene natural products (e.g. siamenoside I and mogrosides IV, V and VI). Cucurbitacins have cytotoxic properties and exhibit deterrent taste as a defense barrier against herbivores. Mogrosides are nonsugar highly oxygenated compounds used as high-intensity zero-calorie sweeteners; they also possess pharmacological properties such as regulating immunity, lowering blood sugar and lipid levels, protecting the liver, and acting as antioxidants and antitumor agents. Catalyzes the branched glucosylations of mogroside II-E, mogroside III and mogroside IV. This Siraitia grosvenorii (Monk's fruit) protein is Mogroside IIIx synthase.